The chain runs to 487 residues: N-succinylglutamate 5-semialdehyde dehydrogenase (487 aa).

Residue 221–226 coordinates NAD(+); sequence GSSDTG. Residues glutamate 244 and cysteine 278 contribute to the active site.

Belongs to the aldehyde dehydrogenase family. AstD subfamily.

It catalyses the reaction N-succinyl-L-glutamate 5-semialdehyde + NAD(+) + H2O = N-succinyl-L-glutamate + NADH + 2 H(+). It functions in the pathway amino-acid degradation; L-arginine degradation via AST pathway; L-glutamate and succinate from L-arginine: step 4/5. Its function is as follows. Catalyzes the NAD-dependent reduction of succinylglutamate semialdehyde into succinylglutamate. The sequence is that of N-succinylglutamate 5-semialdehyde dehydrogenase from Burkholderia pseudomallei (strain 1106a).